The sequence spans 187 residues: Lysozyme C-like protein DDB_G0288143 (187 aa).

The signal sequence occupies residues 1-23 (MKVSNLISTITIASALCLSLTNA). Disulfide bonds link Cys-50/Cys-125, Cys-74/Cys-82, and Cys-78/Cys-97. The active site involves Glu-55. The interval 133–187 (QHGSHSSTSRDSSSSSSRDSTGTGYSSSGSGTSGSGSNSGQTGHFIPGQSGHGLN) is disordered. Residues 136 to 175 (SHSSTSRDSSSSSSRDSTGTGYSSSGSGTSGSGSNSGQTG) are compositionally biased toward low complexity.

This sequence belongs to the glycosyl hydrolase 22 family.

The polypeptide is Lysozyme C-like protein DDB_G0288143 (Dictyostelium discoideum (Social amoeba)).